Consider the following 495-residue polypeptide: Cytoplasmic alpha-amylase (495 aa).

The Ca(2+) site is built by asparagine 104 and aspartate 198. The active-site Nucleophile is aspartate 235. Residue histidine 239 participates in Ca(2+) binding. Residue glutamate 265 is the Proton donor of the active site.

This sequence belongs to the glycosyl hydrolase 13 family. As to quaternary structure, monomer. Requires Ca(2+) as cofactor.

It is found in the cytoplasm. It catalyses the reaction Endohydrolysis of (1-&gt;4)-alpha-D-glucosidic linkages in polysaccharides containing three or more (1-&gt;4)-alpha-linked D-glucose units.. The sequence is that of Cytoplasmic alpha-amylase (amyA) from Escherichia coli (strain K12).